The primary structure comprises 422 residues: MSSNKGNGRLPSLKDSSSNGGGSAKPSLKFKPKAVARKSKEEREAAASKVKLEEESKRGNDKKHFNNKNKRVTGAGGQQRRMAKYLNNTHVISSGPLAAGNFVSEKGDLRRGFIKSEGSGSSLVQKGLETIDNGAESSENEAEDDDNEGVASKSKKKFNMGKEFEARNLIEDEDDGESEKSSDVDMDDEEWRSKRIEQLFPVRPVRVRHEDVETVKREIQEALSEKPTREPTPSVKTEPVGTGLQSYLEERERQVNEKLADLGLEKEFQSVDGKEAAAELELLNADHQHILRKLKKMNNKPERFMVFQLPTRLPAFERPAVKEEKEDMETQASDPSKKKKNIKKKDTKDALSTRELAGKVGSIRVHKSGKLSVKIGNVVMDIGKGAETTFLQDVIALSIADDASSAELLGRVDGKIVVTPQI.

4 disordered regions span residues 1–80 (MSSN…GQQR), 115–190 (KSEG…DDEE), 219–244 (IQEA…GTGL), and 318–350 (RPAV…TKDA). Positions 25–29 (KPSLK) match the Nuclear localization signal motif. Residues 28-37 (LKFKPKAVAR) are compositionally biased toward basic residues. The span at 38–64 (KSKEEREAAASKVKLEEESKRGNDKKH) shows a compositional bias: basic and acidic residues. Residues serine 137 and serine 138 each carry the phosphoserine modification. The span at 138–148 (SENEAEDDDNE) shows a compositional bias: acidic residues. Residues 160-170 (MGKEFEARNLI) are compositionally biased toward basic and acidic residues. Phosphoserine is present on residues serine 178, serine 182, and serine 224. The segment covering 219–229 (IQEALSEKPTR) has biased composition (basic and acidic residues). 2 positions are modified to phosphothreonine: threonine 228 and threonine 232.

It belongs to the eukaryotic RPC4/POLR3D RNA polymerase subunit family. In terms of assembly, component of the RNA polymerase III (Pol III) complex consisting of 17 subunits. Interacts with RPC37/RPC5. RPC53/RPC4, RPC37/RPC5 and RPC11/RPC10 probably form a Pol III subcomplex.

The protein localises to the nucleus. Its function is as follows. DNA-dependent RNA polymerase catalyzes the transcription of DNA into RNA using the four ribonucleoside triphosphates as substrates. Specific peripheric component of RNA polymerase III which synthesizes small RNAs, such as 5S rRNA and tRNAs. Essential for tRNA synthesis. The RPC53/RPC4-RPC37/RPC5 subcomplex is required for terminator recognition and reinitiation. In Saccharomyces cerevisiae (strain ATCC 204508 / S288c) (Baker's yeast), this protein is DNA-directed RNA polymerase III subunit RPC4 (RPC53).